The sequence spans 143 residues: Large-conductance mechanosensitive channel (143 aa).

2 helical membrane passes run 10–30 (FAVK…GAFS) and 89–109 (GSFI…FLMV).

It belongs to the MscL family. In terms of assembly, homopentamer.

It is found in the cell inner membrane. Functionally, channel that opens in response to stretch forces in the membrane lipid bilayer. May participate in the regulation of osmotic pressure changes within the cell. This is Large-conductance mechanosensitive channel from Burkholderia pseudomallei (strain 668).